The sequence spans 326 residues: ELAV-like protein 1 (326 aa).

N-acetylserine is present on Ser-2. At Ser-2 the chain carries Phosphoserine. An RRM 1 domain is found at 20-98 (TNLIVNYLPQ…KTIKVSYARP (79 aa)). Phosphoserine is present on residues Ser-100 and Ser-158. Positions 106-186 (ANLYISGLPR…EPITVKFAAN (81 aa)) constitute an RRM 2 domain. Lys-191 participates in a covalent cross-link: Glycyl lysine isopeptide (Lys-Gly) (interchain with G-Cter in SUMO2). Phosphoserine occurs at positions 197 and 202. Position 206 is an omega-N-methylarginine (Arg-206). The residue at position 217 (Arg-217) is an Asymmetric dimethylarginine; by CARM1; alternate. Arg-217 carries the omega-N-methylarginine; alternate modification. Ser-221 and Ser-318 each carry phosphoserine. The 79-residue stretch at 244 to 322 (WCIFIYNLGQ…KILQVSFKTN (79 aa)) folds into the RRM 3 domain.

Belongs to the RRM elav family. As to quaternary structure, monomer and homodimer (in vitro). Interacts with ANP32A. Interacts with ZNF385A; the interaction is indirect and mRNA-dependent and may regulate p53/TP53 expression. Identified in a mRNP complex, at least composed of DHX9, DDX3X, ELAVL1, HNRNPU, IGF2BP1, ILF3, PABPC1, PCBP2, PTBP2, STAU1, STAU2, SYNCRIP and YBX1. Interacts with AGO1 and AGO2. Interacts with IGF2BP1. Interacts with IGF2BP2 and IGF2BP3. Interacts with HNRNPL. Interacts with DHX36; this interaction occurs in a RNA-dependent manner. Interacts with ILF3; this interaction occurs in a RNA-dependent manner. Interacts with PLEKHN1. Interacts with SHFL; the interaction increases in presence of RNA. Interacts with YBX1; interaction recruits ELAVL1 on C5-methylcytosine (m5C)-containing mRNAs, thereby promoting mRNA stability. Interacts with FXR1. Post-translationally, phosphorylated by MAPKAPK2. Phosphorylated by PRKCD. In terms of processing, methylated at Arg-217 by CARM1 in T-cells in response to LPS challenge.

It is found in the cytoplasm. The protein localises to the nucleus. It localises to the stress granule. Its subcellular location is the P-body. RNA-binding protein that binds to the 3'-UTR region of mRNAs and increases their stability. Involved in embryonic stem cell (ESC) differentiation: preferentially binds mRNAs that are not methylated by N6-methyladenosine (m6A), stabilizing them, promoting ESC differentiation. Has also been shown to be capable of binding to m6A-containing mRNAs and contributes to MYC stability by binding to m6A-containing MYC mRNAs. Binds to poly-U elements and AU-rich elements (AREs) in the 3'-UTR of target mRNAs. Binds avidly to the AU-rich element in FOS and IL3/interleukin-3 mRNAs. In the case of the FOS AU-rich element, binds to a core element of 27 nucleotides that contain AUUUA, AUUUUA, and AUUUUUA motifs. Binds preferentially to the 5'-UUUU[AG]UUU-3' motif in vitro. With ZNF385A, binds the 3'-UTR of p53/TP53 mRNA to control their nuclear export induced by CDKN2A. Hence, may regulate p53/TP53 expression and mediate in part the CDKN2A anti-proliferative activity. May also bind with ZNF385A the CCNB1 mRNA. Increases the stability of the leptin mRNA harboring an AU-rich element (ARE) in its 3' UTR. The chain is ELAV-like protein 1 (Elavl1) from Mus musculus (Mouse).